The primary structure comprises 65 residues: Photosystem II reaction center protein J (65 aa).

Residues 1–18 (MSSKLKGPDGRLPDRLPD) are compositionally biased toward basic and acidic residues. Positions 1 to 21 (MSSKLKGPDGRLPDRLPDGRP) are disordered. The chain crosses the membrane as a helical span at residues 36–56 (LWLVATAGGIAVIFVLGIFFY).

This sequence belongs to the PsbJ family. As to quaternary structure, PSII is composed of 1 copy each of membrane proteins PsbA, PsbB, PsbC, PsbD, PsbE, PsbF, PsbH, PsbI, PsbJ, PsbK, PsbL, PsbM, PsbT, PsbX, PsbY, Psb30/Ycf12, peripheral proteins PsbO, CyanoQ (PsbQ), PsbU, PsbV and a large number of cofactors. It forms dimeric complexes.

It localises to the cellular thylakoid membrane. In terms of biological role, one of the components of the core complex of photosystem II (PSII). PSII is a light-driven water:plastoquinone oxidoreductase that uses light energy to abstract electrons from H(2)O, generating O(2) and a proton gradient subsequently used for ATP formation. It consists of a core antenna complex that captures photons, and an electron transfer chain that converts photonic excitation into a charge separation. This chain is Photosystem II reaction center protein J, found in Prochlorococcus marinus (strain SARG / CCMP1375 / SS120).